A 176-amino-acid polypeptide reads, in one-letter code: MCKTLHGTLLLLAIFVLFLNFSHATAKRTRRGMEIFEKNFIDKNKLKDVYDVFKYLYNTHSADTYLSNIKNESFTMNIWGFGEIEMVKTKCRKIDSDFYKCSFQREFYNLKRTPGETMYYISLPGSVRCRKLLSKLDNCPFEEQTEQLKREICYFVVYPDYIEQNIHAVRFDCYTK.

The first 26 residues, 1–26 (MCKTLHGTLLLLAIFVLFLNFSHATA), serve as a signal peptide directing secretion. Positions 27–31 (KRTRR) are excised as a propeptide. Asn-71 is a glycosylation site (N-linked (GlcNAc...) asparagine). Intrachain disulfides connect Cys-129/Cys-139 and Cys-153/Cys-173.

Belongs to the cystatin family. In terms of tissue distribution, prostate and lacrimal gland.

The polypeptide is Cystatin-related protein 1 (Andpro) (Rattus norvegicus (Rat)).